The sequence spans 106 residues: Glutaredoxin-1 (106 aa).

A2 is modified (N-acetylalanine). The Glutaredoxin domain maps to 3–106 (QAFVNSKIQP…TRLQQIGALK (104 aa)). K9 is subject to N6-succinyllysine. Disulfide bonds link C23–C26 and C79–C83.

This sequence belongs to the glutaredoxin family.

It is found in the cytoplasm. Its function is as follows. Has a glutathione-disulfide oxidoreductase activity in the presence of NADPH and glutathione reductase. Reduces low molecular weight disulfides and proteins. This chain is Glutaredoxin-1 (GLRX), found in Sus scrofa (Pig).